The sequence spans 287 residues: MNKTTNGWINGFIGVLIFSGSLPATRLAVSDFDPLFLTVCRAAIAGVLAGGLLLIFRQQHPAKRDLISLLVVAFGVVIGFPLLTALALQHVTSAHAIVFIGLLPLATAVFGVLRGGERPRPVFWIFSAAGSLLVAGFALIQGGGSSPLGDAYMLASIVVCGLGYAEGAKLSRRLGNWQVISWALVLSLPLMLPLSFFFTPDSWSAIGVPALLSLAYVSLFSMLIGFVFWYRGLAQGGIAAVGQLQLLQPFFGLLLASVILHEKVGWALVAVNIAVIMCVAAARRFAK.

A run of 10 helical transmembrane segments spans residues 4–24 (TTNG…SLPA), 36–56 (FLTV…LLIF), 66–86 (LISL…LTAL), 93–113 (SAHA…FGVL), 122–142 (VFWI…LIQG), 148–168 (LGDA…AEGA), 179–199 (VISW…FFFT), 208–228 (VPAL…GFVF), 237–259 (GIAA…ASVI), and 264–286 (VGWA…RRFA). 2 consecutive EamA domains span residues 16-139 (LIFS…GFAL) and 158-284 (VVCG…AARR).

Belongs to the EamA transporter family.

The protein resides in the cell membrane. This is an uncharacterized protein from Bacillus subtilis (strain 168).